Here is a 277-residue protein sequence, read N- to C-terminus: Release factor glutamine methyltransferase (277 aa).

Residues 117 to 121 (GTGCG), Asp140, Trp168, and Asn182 contribute to the S-adenosyl-L-methionine site. 182–185 (NPPY) contributes to the substrate binding site.

It belongs to the protein N5-glutamine methyltransferase family. PrmC subfamily.

It catalyses the reaction L-glutaminyl-[peptide chain release factor] + S-adenosyl-L-methionine = N(5)-methyl-L-glutaminyl-[peptide chain release factor] + S-adenosyl-L-homocysteine + H(+). Methylates the class 1 translation termination release factors RF1/PrfA and RF2/PrfB on the glutamine residue of the universally conserved GGQ motif. The chain is Release factor glutamine methyltransferase from Buchnera aphidicola subsp. Acyrthosiphon pisum (strain APS) (Acyrthosiphon pisum symbiotic bacterium).